The chain runs to 330 residues: Beta-hexosaminidase (330 aa).

Substrate is bound by residues Asp-62, Arg-70, Arg-133, and 163 to 164 (KH). His-176 serves as the catalytic Proton donor/acceptor. Asp-246 (nucleophile) is an active-site residue.

Belongs to the glycosyl hydrolase 3 family. NagZ subfamily.

The protein resides in the cytoplasm. It carries out the reaction Hydrolysis of terminal non-reducing N-acetyl-D-hexosamine residues in N-acetyl-beta-D-hexosaminides.. The protein operates within cell wall biogenesis; peptidoglycan recycling. Its function is as follows. Plays a role in peptidoglycan recycling by cleaving the terminal beta-1,4-linked N-acetylglucosamine (GlcNAc) from peptide-linked peptidoglycan fragments, giving rise to free GlcNAc, anhydro-N-acetylmuramic acid and anhydro-N-acetylmuramic acid-linked peptides. The chain is Beta-hexosaminidase from Idiomarina loihiensis (strain ATCC BAA-735 / DSM 15497 / L2-TR).